The primary structure comprises 184 residues: ATP synthase subunit b, chloroplastic (184 aa).

Residues 27-49 form a helical membrane-spanning segment; it reads LATNLINLSVVIGVLIFFGKGVL.

It belongs to the ATPase B chain family. As to quaternary structure, F-type ATPases have 2 components, F(1) - the catalytic core - and F(0) - the membrane proton channel. F(1) has five subunits: alpha(3), beta(3), gamma(1), delta(1), epsilon(1). F(0) has four main subunits: a(1), b(1), b'(1) and c(10-14). The alpha and beta chains form an alternating ring which encloses part of the gamma chain. F(1) is attached to F(0) by a central stalk formed by the gamma and epsilon chains, while a peripheral stalk is formed by the delta, b and b' chains.

It is found in the plastid. The protein resides in the chloroplast thylakoid membrane. F(1)F(0) ATP synthase produces ATP from ADP in the presence of a proton or sodium gradient. F-type ATPases consist of two structural domains, F(1) containing the extramembraneous catalytic core and F(0) containing the membrane proton channel, linked together by a central stalk and a peripheral stalk. During catalysis, ATP synthesis in the catalytic domain of F(1) is coupled via a rotary mechanism of the central stalk subunits to proton translocation. Functionally, component of the F(0) channel, it forms part of the peripheral stalk, linking F(1) to F(0). This chain is ATP synthase subunit b, chloroplastic, found in Jasminum nudiflorum (Winter jasmine).